The chain runs to 334 residues: uncharacterized protein (334 aa).

The next 2 membrane-spanning stretches (helical) occupy residues 1-21 (MFRL…FTFI) and 46-66 (ILGL…IIII).

Its subcellular location is the cell membrane. This is an uncharacterized protein from Rickettsia prowazekii (strain Madrid E).